Reading from the N-terminus, the 397-residue chain is Tryptophan synthase beta chain (397 aa).

Residue Lys91 is modified to N6-(pyridoxal phosphate)lysine.

It belongs to the TrpB family. Tetramer of two alpha and two beta chains. Pyridoxal 5'-phosphate serves as cofactor.

The catalysed reaction is (1S,2R)-1-C-(indol-3-yl)glycerol 3-phosphate + L-serine = D-glyceraldehyde 3-phosphate + L-tryptophan + H2O. Its pathway is amino-acid biosynthesis; L-tryptophan biosynthesis; L-tryptophan from chorismate: step 5/5. Functionally, the beta subunit is responsible for the synthesis of L-tryptophan from indole and L-serine. The polypeptide is Tryptophan synthase beta chain (Bacillus cereus (strain ATCC 14579 / DSM 31 / CCUG 7414 / JCM 2152 / NBRC 15305 / NCIMB 9373 / NCTC 2599 / NRRL B-3711)).